The primary structure comprises 170 residues: Arginine repressor (170 aa).

Belongs to the ArgR family.

The protein resides in the cytoplasm. The protein operates within amino-acid biosynthesis; L-arginine biosynthesis [regulation]. In terms of biological role, regulates arginine biosynthesis genes. The polypeptide is Arginine repressor (Bifidobacterium longum (strain NCC 2705)).